The chain runs to 728 residues: MITRIPRSSFSANINNTAQTNEHQTLSELFYKELEDKFSGKELATPLLKSFSENCRQNGRHIFSNKDFVIKFSTSVLQADKKEITIINKNENTTLTQTIAPIFEKYLMEILPQRSDTLDKQELNLKSDRKEKEFPRIKLNGQCYFPGRPQNRIVCRHIAAQYINDIYQNVDYKPHQDDYSSAEKFLTHFNKKCKNQTLALVSSRPEGRCVAACGDFGLVMKAYFDKMESNGISVMAAILLVDNHALTVRLRIKNTTEGCTHYVVSVYDPNVTNDKIRIMSESKENIKHYSLMDFMNVDYSLLKWSNDHVINQSVAIIPALPKEQLLMLKGSVDEITPPLSPATMNLLMAIGQNHQLTQLMIQLQKMPELHRTEMLTAYNSINLPGLYLAINYGNADIVETIFNSLSETGYEGLLSKKNLMHILEAKDKNGFSGLFLAISRKDKNVVTSILNALPKLAATHHLDNEQVYKFLSAKNRTSSHVLYHVMANGDADMLKIVLNALPLLIRTCHLTKEQVLDLLKAKDFYGCPGLYLAMQNGHSDIVKVILEALPSLAQEINISASDIVDLLTAKSLARDTGLFMAMQRGHMNVINTIFNALPTLFNTFKFDKKNMKPLLLANNSNEYPGLFSAIQHKQQNVVETVYLALSDHARLFGFTAEDIMDFWQHKAPQKYSAFELAFEFGHRVIAELILNTLNKMAESFGFTDNPRYIAEKNYMEALLKKASPHTVR.

ANK repeat units follow at residues 381-410 (INLP…ETGY), 429-458 (NGFS…KLAA), 477-506 (TSSH…LLIR), 525-554 (YGCP…SLAQ), and 573-602 (ARDT…TLFN).

This sequence belongs to the Toxin_15 family.

The chain is Ankyrin repeat protein A (arpA) from Escherichia coli (strain K12).